The sequence spans 311 residues: Insulin-like growth factor-binding protein 2 (311 aa).

Positions 1–36 (MALGGVGRGGAARAAWPRLLLAALAPALALAGPALP) are cleaved as a signal peptide. The 83-residue stretch at 38–120 (VLFRCPPCTA…VQGQGTCARP (83 aa)) folds into the IGFBP N-terminal domain. 6 disulfides stabilise this stretch: Cys-42-Cys-70, Cys-45-Cys-72, Cys-53-Cys-73, Cys-61-Cys-76, Cys-84-Cys-97, and Cys-91-Cys-117. Disordered stretches follow at residues 112 to 168 (QGQG…PLKT) and 188 to 210 (GKVG…TGRT). The Thyroglobulin type-1 domain occupies 209–291 (RTPCQQELDQ…APTIRGDPEC (83 aa)). 3 disulfides stabilise this stretch: Cys-212–Cys-246, Cys-257–Cys-268, and Cys-270–Cys-291. The Cell attachment site motif lies at 286–288 (RGD).

As to quaternary structure, binds IGF2 more than IGF1.

It is found in the secreted. In terms of biological role, inhibits IGF-mediated growth and developmental rates. IGF-binding proteins prolong the half-life of the IGFs and have been shown to either inhibit or stimulate the growth promoting effects of the IGFs on cell culture. They alter the interaction of IGFs with their cell surface receptors. This is Insulin-like growth factor-binding protein 2 (IGFBP2) from Gallus gallus (Chicken).